The sequence spans 627 residues: uncharacterized protein (627 aa).

Disordered regions lie at residues 141-187 (LRYP…TPPS) and 490-510 (ENENTNGSANNSTYTNGGPRT). Residues 491–510 (NENTNGSANNSTYTNGGPRT) are compositionally biased toward polar residues. Phosphoserine is present on serine 559.

This is an uncharacterized protein from Saccharomyces cerevisiae (strain ATCC 204508 / S288c) (Baker's yeast).